A 384-amino-acid polypeptide reads, in one-letter code: WD repeat-containing protein 55 (384 aa).

Positions Met-1–Glu-33 are disordered. A compositionally biased stretch (acidic residues) spans Pro-9–Leu-19. 7 WD repeats span residues Val-36–Lys-75, His-82–Arg-121, Ala-125–Asp-163, Gln-166–Leu-205, Pro-208–Asp-247, Ala-250–Thr-289, and His-293–Val-332. Phosphoserine is present on residues Ser-354 and Ser-383. The segment at Leu-362–Asp-384 is disordered. Acidic residues predominate over residues Val-375 to Asp-384.

Belongs to the WD repeat WDR55 family.

It is found in the nucleus. The protein localises to the nucleolus. The protein resides in the cytoplasm. Functionally, nucleolar protein that acts as a modulator of rRNA synthesis. Plays a central role during organogenesis. The chain is WD repeat-containing protein 55 (Wdr55) from Rattus norvegicus (Rat).